Here is a 283-residue protein sequence, read N- to C-terminus: Peroxisome biogenesis protein 22 (283 aa).

Position 2 is an N-acetylalanine (Ala2). The helical transmembrane segment at 45–62 (IGAIAGLAIAVIFTWRAI) threads the bilayer. The segment at 66–107 (GEQRQRRQPKRRIHNAETSSAAAAASQSNLASSVAPEVSSPR) is disordered. Positions 81 to 100 (AETSSAAAAASQSNLASSVA) are enriched in low complexity.

It belongs to the peroxin-22 family. Interacts with PEX4.

The protein resides in the peroxisome membrane. Functionally, may be tethered PEX4 to the peroxisome membrane and may be involved in a late step of the matrix protein import. Does not play a role in the biogenesis of the peroxisomal membrane. The polypeptide is Peroxisome biogenesis protein 22 (PEX22) (Arabidopsis thaliana (Mouse-ear cress)).